The chain runs to 306 residues: Probable dimethyladenosine transferase (306 aa).

Residues H30, L32, G57, E78, D106, and N121 each contribute to the S-adenosyl-L-methionine site.

Belongs to the class I-like SAM-binding methyltransferase superfamily. rRNA adenine N(6)-methyltransferase family. Part of the small subunit (SSU) processome, composed of more than 70 proteins and the RNA chaperone small nucleolar RNA (snoRNA) U3.

It localises to the nucleus. It is found in the nucleolus. The enzyme catalyses adenosine(1779)/adenosine(1780) in 18S rRNA + 4 S-adenosyl-L-methionine = N(6)-dimethyladenosine(1779)/N(6)-dimethyladenosine(1780) in 18S rRNA + 4 S-adenosyl-L-homocysteine + 4 H(+). Functionally, specifically dimethylates two adjacent adenosines in the loop of a conserved hairpin near the 3'-end of 18S rRNA in the 40S particle. Involved in the pre-rRNA processing steps leading to small-subunit rRNA production independently of its RNA-modifying catalytic activity. Part of the small subunit (SSU) processome, first precursor of the small eukaryotic ribosomal subunit. During the assembly of the SSU processome in the nucleolus, many ribosome biogenesis factors, an RNA chaperone and ribosomal proteins associate with the nascent pre-rRNA and work in concert to generate RNA folding, modifications, rearrangements and cleavage as well as targeted degradation of pre-ribosomal RNA by the RNA exosome. In Drosophila melanogaster (Fruit fly), this protein is Probable dimethyladenosine transferase.